Reading from the N-terminus, the 201-residue chain is Large ribosomal subunit protein uL4 (201 aa).

The segment at 44-71 (RAQKTRAEVTGSGKKPWRQKGTGRARSG) is disordered.

The protein belongs to the universal ribosomal protein uL4 family. In terms of assembly, part of the 50S ribosomal subunit.

Its function is as follows. One of the primary rRNA binding proteins, this protein initially binds near the 5'-end of the 23S rRNA. It is important during the early stages of 50S assembly. It makes multiple contacts with different domains of the 23S rRNA in the assembled 50S subunit and ribosome. In terms of biological role, forms part of the polypeptide exit tunnel. This chain is Large ribosomal subunit protein uL4, found in Shigella flexneri serotype 5b (strain 8401).